The primary structure comprises 786 residues: Pentatricopeptide repeat-containing protein At2g22070 (786 aa).

PPR repeat units follow at residues 48-78 (SVYL…MPLR), 79-109 (TAFS…LPQR), 110-144 (DSVS…GIEP), 145-179 (TQFT…GLRG), 180-214 (NVSV…DISS), 215-241 (WNAM…MAER), 242-276 (DIVT…SLLS), 278-312 (DRFT…GFDI), 313-347 (SGIV…DLKI), 350-376 (FTAL…LKDR), 377-411 (DVVA…GQRP), 412-446 (NSYT…GEIY), 447-477 (SVSV…IRCE), 479-513 (DTVS…GLRP), 514-548 (DHIT…DKII), and 550-580 (TLSH…MPIE). Residues 585–660 (TWGSLLSACR…EQGFSWIEVK (76 aa)) are type E motif. Residues 661-691 (HKVHVFGVEDGTHPEKNEIYMTMKKIWDEIK) form a type E(+) motif region. Positions 692-786 (KMGYVPDTAS…DGFCSCRDYW (95 aa)) are type DYW motif.

This sequence belongs to the PPR family. PCMP-H subfamily.

This Arabidopsis thaliana (Mouse-ear cress) protein is Pentatricopeptide repeat-containing protein At2g22070 (PCMP-H41).